The following is a 511-amino-acid chain: Maturase K (511 aa).

The protein belongs to the intron maturase 2 family. MatK subfamily.

It is found in the plastid. The protein resides in the chloroplast. In terms of biological role, usually encoded in the trnK tRNA gene intron. Probably assists in splicing its own and other chloroplast group II introns. The protein is Maturase K of Hordeum bulbosum (Bulbous barley).